Here is a 660-residue protein sequence, read N- to C-terminus: Pro-secreted protein ORF2 (660 aa).

The N-terminal stretch at 1-19 (MGPRPILLLFLMFLPMLLA) is a signal peptide. Disordered regions lie at residues 20–43 (PPPG…GFWG) and 66–127 (VTAA…DVDS). Residues 28 to 33 (RRRGRR) carry the Nuclear localization signal motif. A compositionally biased stretch (low complexity) spans 92 to 116 (QRPAAASRRRPTTAGAAPLTAVAPA). Asn137 and Asn310 each carry an N-linked (GlcNAc...) asparagine; by host glycan. Residues 368–394 (IALTLFNLADTLLGGLPTELISSAGGQ) form a particle formation region. Asn562 is a glycosylation site (N-linked (GlcNAc...) asparagine; by host). Positions 585–610 (TTSLGAGPVSISAVAVLGPHSALALL) are oligomerization.

The protein belongs to the hepevirus capsid protein family. In terms of assembly, homodimer. As to quaternary structure, self-assembles to form the capsid. The capsid is dominated by dimers that define the 30 morphological units. Interacts with phosphorylated protein ORF3. Interacts with host TMEM134. Interacts with host ASGR1 and ASGR2; these interactions facilitate infection of host hepatocytes. Cleaved by host protease in the N-terminus. In terms of processing, N-glycosylated. Post-translationally, not N-glycosylated. The C-terminus of the capsid protein ORF2 is truncated in non-enveloped virions shedded in feces, probably due to host proteases.

The protein localises to the secreted. It is found in the virion. Its subcellular location is the host cytoplasm. It localises to the host endoplasmic reticulum. The protein resides in the host Golgi apparatus. The protein localises to the host cell surface. Plays a role in the inhibition of host antibody-mediated neutralization without blocking viral cell entry. Functionally, forms an icosahedral capsid with a T=1 symmetry and a 34 nm diameter. The capsid is composed of 60 copies linked to each other. Binds to the 5' end of the genomic RNA to mediate genome encapsidation. Binds to heparin surface proteoglycans (HSPGs) to mediate viral entry. Additionally, the interactions with host ASGR1 and ASGR2 facilitate viral infection of hepatocytes. Inhibits IFN production by blocking host TBK1-induced IRF3 phosphorylation. The nuclear form probably modulates host gene expression. This is Pro-secreted protein ORF2 from Bandicota bengalensis (lesser bandicoot rat).